The chain runs to 204 residues: Large ribosomal subunit protein eL15 (204 aa).

Belongs to the eukaryotic ribosomal protein eL15 family.

This is Large ribosomal subunit protein eL15 (RpL15) from Anopheles gambiae (African malaria mosquito).